We begin with the raw amino-acid sequence, 130 residues long: MSMQDPVADMLTRIRNGQSANKYSVKMPCSKLKYSIIELLKKEGYIKNFNIQGNNKLKIEVILKYFKGKSVIETIQRVSRPSLRIYKKKNNLPTVMAGLGIAIISTSQGIMTDRKARRLGLGGEVICYVA.

This sequence belongs to the universal ribosomal protein uS8 family. In terms of assembly, part of the 30S ribosomal subunit. Contacts proteins S5 and S12.

In terms of biological role, one of the primary rRNA binding proteins, it binds directly to 16S rRNA central domain where it helps coordinate assembly of the platform of the 30S subunit. The chain is Small ribosomal subunit protein uS8 from Buchnera aphidicola subsp. Schizaphis graminum (strain Sg).